The following is a 334-amino-acid chain: Ribosomal RNA small subunit methyltransferase H (334 aa).

Residues 39-41, aspartate 59, phenylalanine 83, aspartate 100, and glutamine 107 each bind S-adenosyl-L-methionine; that span reads GGH. Positions 303–334 are disordered; that stretch reads ERTQAHGAERSDMRRAERPDARRAEHGEVLPP.

The protein belongs to the methyltransferase superfamily. RsmH family.

The protein localises to the cytoplasm. It carries out the reaction cytidine(1402) in 16S rRNA + S-adenosyl-L-methionine = N(4)-methylcytidine(1402) in 16S rRNA + S-adenosyl-L-homocysteine + H(+). Functionally, specifically methylates the N4 position of cytidine in position 1402 (C1402) of 16S rRNA. The polypeptide is Ribosomal RNA small subunit methyltransferase H (Verminephrobacter eiseniae (strain EF01-2)).